Consider the following 540-residue polypeptide: Tyrosinase (540 aa).

A signal peptide spans 1-19; sequence MKSLFLSAVLLQFFETCWS. Residues 20–480 lie on the Lumenal, melanosome side of the membrane; it reads QFPRPCANSE…LQQAQQIWQW (461 aa). N87 carries an N-linked (GlcNAc...) asparagine glycan. Residues H182, H205, and H214 each coordinate Cu cation. Residues N233, N293, and N340 are each glycosylated (N-linked (GlcNAc...) asparagine). Cu cation is bound by residues H366 and H370. N-linked (GlcNAc...) asparagine glycosylation occurs at N374. H393 is a binding site for Cu cation. Residues 481–501 form a helical membrane-spanning segment; it reads LLGAGILGALIATIVAAVIVF. Residues 502 to 540 lie on the Cytoplasmic side of the membrane; the sequence is ARRKRRRNQKRKRAPSFGERQPLLQSSSEEGSSSYQTTL. A disordered region spans residues 511-540; sequence KRKRAPSFGERQPLLQSSSEEGSSSYQTTL. Over residues 527-540 the composition is skewed to low complexity; that stretch reads SSSEEGSSSYQTTL.

Belongs to the tyrosinase family. Cu(2+) is required as a cofactor.

The protein localises to the melanosome membrane. It carries out the reaction 2 L-dopa + O2 = 2 L-dopaquinone + 2 H2O. The catalysed reaction is L-tyrosine + O2 = L-dopaquinone + H2O. In terms of biological role, this is a copper-containing oxidase that functions in the formation of pigments such as melanins and other polyphenolic compounds. The chain is Tyrosinase (tyr) from Oryzias latipes (Japanese rice fish).